Reading from the N-terminus, the 241-residue chain is Small ribosomal subunit protein uS3 (241 aa).

Residues 22–91 (VDEYLAYKFH…NPQVTVVKVE (70 aa)) form the KH type-2 domain. A disordered region spans residues 218–241 (EMQQTQPEAPTLEETVEQSGGETQ).

Belongs to the universal ribosomal protein uS3 family. Part of the 30S ribosomal subunit.

Its function is as follows. Binds the lower part of the 30S subunit head. This chain is Small ribosomal subunit protein uS3, found in Ignicoccus hospitalis (strain KIN4/I / DSM 18386 / JCM 14125).